The chain runs to 43 residues: Protein PsbN (43 aa).

A helical transmembrane segment spans residues 5 to 27 (TLVAISISCLLVSFTGYALYTAF).

This sequence belongs to the PsbN family.

It localises to the plastid. The protein resides in the chloroplast thylakoid membrane. In terms of biological role, may play a role in photosystem I and II biogenesis. This chain is Protein PsbN, found in Cedrus deodara (Deodar cedar).